The primary structure comprises 242 residues: Biosynthetic peptidoglycan transglycosylase (242 aa).

Residues 19–39 (LMVVLAVFWGGGIALFSVAPV) form a helical membrane-spanning segment.

The protein belongs to the glycosyltransferase 51 family.

It localises to the cell inner membrane. The enzyme catalyses [GlcNAc-(1-&gt;4)-Mur2Ac(oyl-L-Ala-gamma-D-Glu-L-Lys-D-Ala-D-Ala)](n)-di-trans,octa-cis-undecaprenyl diphosphate + beta-D-GlcNAc-(1-&gt;4)-Mur2Ac(oyl-L-Ala-gamma-D-Glu-L-Lys-D-Ala-D-Ala)-di-trans,octa-cis-undecaprenyl diphosphate = [GlcNAc-(1-&gt;4)-Mur2Ac(oyl-L-Ala-gamma-D-Glu-L-Lys-D-Ala-D-Ala)](n+1)-di-trans,octa-cis-undecaprenyl diphosphate + di-trans,octa-cis-undecaprenyl diphosphate + H(+). It participates in cell wall biogenesis; peptidoglycan biosynthesis. Peptidoglycan polymerase that catalyzes glycan chain elongation from lipid-linked precursors. This chain is Biosynthetic peptidoglycan transglycosylase, found in Escherichia coli O157:H7.